The sequence spans 160 residues: S-protein homolog 13 (160 aa).

The signal sequence occupies residues Met-1–Ala-27.

The protein belongs to the plant self-incompatibility (S1) protein family.

It localises to the secreted. The protein is S-protein homolog 13 of Arabidopsis thaliana (Mouse-ear cress).